The sequence spans 291 residues: Isopentenyl-diphosphate Delta-isomerase I, chloroplastic (291 aa).

Residues 1-52 (MSTASLFSFPSFHLRSLLPSLSSSSSSSSSRFAPPRLSPIRSPAPRTQLSVR) constitute a chloroplast transit peptide. Position 2 is an N-acetylthreonine (serine 2). Residues 20 to 39 (SLSSSSSSSSSRFAPPRLSP) are compositionally biased toward low complexity. Positions 20-43 (SLSSSSSSSSSRFAPPRLSPIRSP) are disordered. A substrate-binding site is contributed by lysine 95. 2 residues coordinate Mg(2+): histidine 99 and histidine 111. Residues 109-261 (LLHRAFSVFL…AVKLSPWFRL (153 aa)) form the Nudix hydrolase domain. Arginine 130 and lysine 134 together coordinate substrate. Cysteine 146 is a catalytic residue. Position 147 (serine 147) interacts with substrate. A Nudix box motif is present at residues 147-177 (SHPLYRESELIEENVLGVRNAAQRKLFDELG). Residues glutamate 206 and glutamate 208 each coordinate Mg(2+). Glutamate 208 is a catalytic residue.

The protein belongs to the IPP isomerase type 1 family. The cofactor is Mg(2+).

It is found in the plastid. It localises to the chloroplast. The protein localises to the cytoplasm. The catalysed reaction is isopentenyl diphosphate = dimethylallyl diphosphate. The protein operates within isoprenoid biosynthesis; dimethylallyl diphosphate biosynthesis; dimethylallyl diphosphate from isopentenyl diphosphate: step 1/1. It participates in porphyrin-containing compound metabolism; chlorophyll biosynthesis. Its function is as follows. Catalyzes the 1,3-allylic rearrangement of the homoallylic substrate isopentenyl (IPP) to its highly electrophilic allylic isomer, dimethylallyl diphosphate (DMAPP). This Arabidopsis thaliana (Mouse-ear cress) protein is Isopentenyl-diphosphate Delta-isomerase I, chloroplastic (IPP1).